The chain runs to 642 residues: Threonine--tRNA ligase (642 aa).

Residues 1–61 form the TGS domain; that stretch reads MPVITLPDGS…ETDATLSIIT (61 aa). The segment at 243–534 is catalytic; it reads DHRKIGKQLD…LTEETAGYFP (292 aa). Residues Cys-334, His-385, and His-511 each contribute to the Zn(2+) site.

This sequence belongs to the class-II aminoacyl-tRNA synthetase family. As to quaternary structure, homodimer. Zn(2+) serves as cofactor.

It is found in the cytoplasm. It catalyses the reaction tRNA(Thr) + L-threonine + ATP = L-threonyl-tRNA(Thr) + AMP + diphosphate + H(+). Its function is as follows. Catalyzes the attachment of threonine to tRNA(Thr) in a two-step reaction: L-threonine is first activated by ATP to form Thr-AMP and then transferred to the acceptor end of tRNA(Thr). Also edits incorrectly charged L-seryl-tRNA(Thr). The sequence is that of Threonine--tRNA ligase from Tolumonas auensis (strain DSM 9187 / NBRC 110442 / TA 4).